The following is a 1219-amino-acid chain: FK506-binding protein 15 (1219 aa).

Position 1 is an N-acetylmethionine (methionine 1). Phosphoserine is present on residues serine 14 and serine 23. The tract at residues 41-66 (YTAPKQPKKGQGTAATGNQATPKTAP) is disordered. Residues 53-66 (TAATGNQATPKTAP) show a composition bias toward polar residues. The interval 72–169 (PTILVATAVH…AVEFNKQVCI (98 aa)) is important for function in growth cone organization. Lysine 92 carries the N6-acetyllysine modification. The PPIase FKBP-type domain occupies 197–290 (GDSLEVAYTG…VFEVEVRRVK (94 aa)). Positions 294–349 (DSGSDGHSVSSRDSAAPSPIPGADNLSADPVVSPPTSIPFKSGEPALRTKSNSLSE) are disordered. Phosphoserine is present on residues serine 307, serine 311, serine 326, serine 344, serine 346, and serine 356. The interval 381–433 (PQLDSNDSEIEDVNTLQGGGQPVVTPSVQPSLHPAHPALPQMTSQAPQPSVTG) is disordered. The segment covering 421–433 (QMTSQAPQPSVTG) has biased composition (polar residues). 3 coiled-coil regions span residues 522 to 789 (AVSK…TDQA), 818 to 878 (DEHL…GVEA), and 925 to 951 (TLQL…AEER). Phosphoserine is present on serine 619. A disordered region spans residues 739-761 (LEKNLSERKKKSAQERSQAEEEI). A disordered region spans residues 931 to 1219 (QQEQEKEESS…DDDDDIDWLG (289 aa)). A phosphoserine mark is found at serine 939, serine 940, serine 941, and serine 956. Positions 957-971 (QEQSASASSGQPQAP) are enriched in low complexity. 6 positions are modified to phosphoserine: serine 979, serine 1024, serine 1056, serine 1061, serine 1065, and serine 1097. Over residues 1090–1100 (QESSTRLSLTS) the composition is skewed to polar residues. Threonine 1099 is modified (phosphothreonine). Serine 1114 carries the post-translational modification Phosphoserine. Over residues 1123-1139 (LKKDDVTSSTGPHKELS) the composition is skewed to basic and acidic residues. Serine 1158, serine 1161, serine 1162, serine 1164, and serine 1195 each carry phosphoserine. A Phosphothreonine modification is found at threonine 1203. Positions 1207 to 1219 (GDDDDDDDIDWLG) are enriched in acidic residues.

The protein belongs to the FKBP-type PPIase family. Interacts with WIP and actin. Interacts with TBC1D23.

The protein localises to the cytoplasm. It is found in the cell projection. It localises to the axon. The protein resides in the early endosome. In terms of biological role, may be involved in the cytoskeletal organization of neuronal growth cones. Seems to be inactive as a PPIase. Involved in the transport of early endosomes at the level of transition between microfilament-based and microtubule-based movement. This is FK506-binding protein 15 (FKBP15) from Homo sapiens (Human).